A 214-amino-acid polypeptide reads, in one-letter code: Ras-related protein Rab-17 (214 aa).

Residue Ser29 is modified to Phosphoserine. Gly31, Lys32, Thr33, and Thr50 together coordinate GTP. Residues Thr33, Thr50, and Asp73 each contribute to the Mg(2+) site. Positions 43-54 match the Switch 1 motif; the sequence is DFSNVLPTVGCA. A Switch 2 motif is present at residues 75-91; the sequence is AGQEKYQSVCHLYFRGA. Gly76, Asn132, Lys133, Asp135, and Ala163 together coordinate GTP. Residues 183–204 are disordered; sequence RAGDTGSSRPQEGEAVALNQEP. Residues Cys211 and Cys212 are each lipidated (S-geranylgeranyl cysteine).

It belongs to the small GTPase superfamily. Rab family. Mg(2+) is required as a cofactor. Expressed in kidney, liver, and intestine mainly by epithelial cells. Expressed in hippocampus (at protein level).

It is found in the recycling endosome membrane. It localises to the melanosome. The protein resides in the cell projection. Its subcellular location is the dendrite. It catalyses the reaction GTP + H2O = GDP + phosphate + H(+). With respect to regulation, regulated by guanine nucleotide exchange factors (GEFs) which promote the exchange of bound GDP for free GTP. Regulated by GTPase activating proteins (GAPs) which increase the GTP hydrolysis activity. Inhibited by GDP dissociation inhibitors (GDIs). In terms of biological role, the small GTPases Rab are key regulators of intracellular membrane trafficking, from the formation of transport vesicles to their fusion with membranes. Rabs cycle between an inactive GDP-bound form and an active GTP-bound form that is able to recruit to membranes different set of downstream effectors directly responsible for vesicle formation, movement, tethering and fusion. RAB17 is involved in transcytosis, the directed movement of endocytosed material through the cell and its exocytosis from the plasma membrane at the opposite side. Mainly observed in epithelial cells, transcytosis mediates, for instance, the transcellular transport of immunoglobulins from the basolateral surface to the apical surface. Most probably controls membrane trafficking through apical recycling endosomes in a post-endocytic step of transcytosis. Required for melanosome transport and release from melanocytes, it also regulates dendrite and dendritic spine development. May also play a role in cell migration. The polypeptide is Ras-related protein Rab-17 (Mus musculus (Mouse)).